An 879-amino-acid chain; its full sequence is Valine--tRNA ligase (879 aa).

Residues 45–55 (PNVTGKLHLGH) carry the 'HIGH' region motif. The short motif at 521 to 525 (KMSKS) is the 'KMSKS' region element. Lysine 524 is an ATP binding site. Residues 806–879 (LTELVNVDEE…ERIQDLKESK (74 aa)) are a coiled coil.

This sequence belongs to the class-I aminoacyl-tRNA synthetase family. ValS type 1 subfamily. Monomer.

The protein localises to the cytoplasm. It carries out the reaction tRNA(Val) + L-valine + ATP = L-valyl-tRNA(Val) + AMP + diphosphate. In terms of biological role, catalyzes the attachment of valine to tRNA(Val). As ValRS can inadvertently accommodate and process structurally similar amino acids such as threonine, to avoid such errors, it has a 'posttransfer' editing activity that hydrolyzes mischarged Thr-tRNA(Val) in a tRNA-dependent manner. The protein is Valine--tRNA ligase of Lactobacillus acidophilus (strain ATCC 700396 / NCK56 / N2 / NCFM).